A 180-amino-acid polypeptide reads, in one-letter code: Large ribosomal subunit protein uL5 (180 aa).

Belongs to the universal ribosomal protein uL5 family. As to quaternary structure, part of the 50S ribosomal subunit; part of the 5S rRNA/L5/L18/L25 subcomplex. Contacts the 5S rRNA and the P site tRNA. Forms a bridge to the 30S subunit in the 70S ribosome.

In terms of biological role, this is one of the proteins that bind and probably mediate the attachment of the 5S RNA into the large ribosomal subunit, where it forms part of the central protuberance. In the 70S ribosome it contacts protein S13 of the 30S subunit (bridge B1b), connecting the 2 subunits; this bridge is implicated in subunit movement. Contacts the P site tRNA; the 5S rRNA and some of its associated proteins might help stabilize positioning of ribosome-bound tRNAs. This chain is Large ribosomal subunit protein uL5, found in Stenotrophomonas maltophilia (strain R551-3).